The sequence spans 473 residues: Xylan O-acetyltransferase 14 (473 aa).

The segment covering 1 to 17 has biased composition (polar residues); it reads MTTTGSTPPRKNRSNVT. The disordered stretch occupies residues 1-22; that stretch reads MTTTGSTPPRKNRSNVTGGEGG. At 1-54 the chain is on the cytoplasmic side; it reads MTTTGSTPPRKNRSNVTGGEGGSLEEYAWRAAGEAAAAKKATRAWGVSVSLRSH. A helical; Signal-anchor for type II membrane protein transmembrane segment spans residues 55–75; the sequence is FSSLVLLLLLLLVALAVSATT. The disordered stretch occupies residues 76–101; it reads KNGDPAETPHAPPLPPPASIKLPSSS. The Lumenal segment spans residues 76–473; that stretch reads KNGDPAETPH…NQLLYAHIVS (398 aa). 4 disulfides stabilise this stretch: Cys-108–Cys-159, Cys-130–Cys-195, Cys-139–Cys-455, and Cys-370–Cys-451. Positions 182–184 match the GDS motif motif; sequence GDS. Catalysis depends on Ser-184, which acts as the Nucleophile. N-linked (GlcNAc...) asparagine glycosylation is found at Asn-209, Asn-223, and Asn-414. Catalysis depends on Asp-450, which acts as the Proton donor. The DXXH motif motif lies at 450 to 453; sequence DCIH. His-453 (proton acceptor) is an active-site residue.

This sequence belongs to the PC-esterase family. TBL subfamily.

It is found in the golgi apparatus membrane. Functionally, xylan acetyltransferase required for 2-O- and 3-O-monoacetylation of xylosyl residues in xylan. Catalyzes the 2-O-acetylation of xylan, followed by nonenzymatic acetyl migration to the O-3 position, resulting in products that are monoacetylated at both O-2 and O-3 positions. This is Xylan O-acetyltransferase 14 from Oryza sativa subsp. japonica (Rice).